Consider the following 156-residue polypeptide: Small ribosomal subunit protein uS7 (156 aa).

It belongs to the universal ribosomal protein uS7 family. In terms of assembly, part of the 30S ribosomal subunit. Contacts proteins S9 and S11.

Its function is as follows. One of the primary rRNA binding proteins, it binds directly to 16S rRNA where it nucleates assembly of the head domain of the 30S subunit. Is located at the subunit interface close to the decoding center, probably blocks exit of the E-site tRNA. This Rubrobacter xylanophilus (strain DSM 9941 / JCM 11954 / NBRC 16129 / PRD-1) protein is Small ribosomal subunit protein uS7.